We begin with the raw amino-acid sequence, 57 residues long: DNA-directed RNA polymerase subunit Rpo6 (57 aa).

It belongs to the archaeal Rpo6/eukaryotic RPB6 RNA polymerase subunit family. Part of the RNA polymerase complex.

The protein localises to the cytoplasm. It is found in the chromosome. The catalysed reaction is RNA(n) + a ribonucleoside 5'-triphosphate = RNA(n+1) + diphosphate. In terms of biological role, DNA-dependent RNA polymerase (RNAP) catalyzes the transcription of DNA into RNA using the four ribonucleoside triphosphates as substrates. The polypeptide is DNA-directed RNA polymerase subunit Rpo6 (Thermococcus kodakarensis (strain ATCC BAA-918 / JCM 12380 / KOD1) (Pyrococcus kodakaraensis (strain KOD1))).